Here is a 541-residue protein sequence, read N- to C-terminus: Zinc finger protein 503 (541 aa).

A compositionally biased stretch (polar residues) spans 1-18 (MSNSPLGSGSRISHFTTE). Disordered regions lie at residues 1–49 (MSNS…QAGR) and 97–255 (TCSQ…SSSV). Positions 137–157 (AEDKSSFKPYSKHPDKKDQSA) are enriched in basic and acidic residues. Low complexity predominate over residues 236–255 (SLSAAPSPTPASSSSSSSSV). The C2H2-type zinc-finger motif lies at 411–439 (HVCNWVSATGPCDKRFSSSEELLGHLRTH). The segment at 474–511 (GASPGPLTLRSPHHHPLGLSSSRYHPYSKSPLPSGGAP) is disordered.

This sequence belongs to the Elbow/Noc family.

The protein localises to the nucleus. May function as a transcriptional repressor. This chain is Zinc finger protein 503 (znf503), found in Xenopus tropicalis (Western clawed frog).